A 908-amino-acid chain; its full sequence is 5'-3' exoribonuclease 2 homolog (908 aa).

The CCHC-type zinc-finger motif lies at 263–280 (RPCDICNGFGHEMDKCVG). Disordered regions lie at residues 409 to 457 (RQRR…VGNY) and 821 to 908 (GGNQ…YRRF). Residues 432-454 (HGSLNQSAFGASAVGPNSQQRSV) show a composition bias toward polar residues. Phosphoserine is present on Ser438. Composition is skewed to low complexity over residues 825 to 868 (GQSY…HNQR) and 878 to 908 (QRNF…YRRF).

It belongs to the 5'-3' exonuclease family. XRN2/RAT1 subfamily. As to quaternary structure, interacts with cuff and Rai1; the interaction with cuff may inhibit its role in RNA degradation.

It localises to the nucleus. Functionally, a 5'-3' exoribonuclease. May promote the termination of transcription by RNA polymerase II and promote RNA degradation. Involved in turnover of piRNA precursors. This is 5'-3' exoribonuclease 2 homolog from Drosophila melanogaster (Fruit fly).